We begin with the raw amino-acid sequence, 287 residues long: Oxaloacetate decarboxylase (287 aa).

Ser-50 contributes to the substrate binding site. A Mg(2+)-binding site is contributed by Asp-88. 2 residues coordinate substrate: Arg-159 and His-235.

It belongs to the isocitrate lyase/PEP mutase superfamily. Oxaloacetate decarboxylase family. Homotetramer; dimer of dimers. Mg(2+) is required as a cofactor.

It catalyses the reaction oxaloacetate + H(+) = pyruvate + CO2. In terms of biological role, catalyzes the decarboxylation of oxaloacetate into pyruvate. Seems to play a role in maintaining cellular concentrations of bicarbonate and pyruvate. The sequence is that of Oxaloacetate decarboxylase from Pseudomonas paraeruginosa (strain DSM 24068 / PA7) (Pseudomonas aeruginosa (strain PA7)).